The primary structure comprises 930 residues: Translation initiation factor IF-2 (930 aa).

A compositionally biased stretch (low complexity) spans 50 to 67; that stretch reads FKPAAAPKVEAKPAAPKV. Disordered regions lie at residues 50 to 217 and 260 to 346; these read FKPA…SSEE and EVVP…HELP. Basic and acidic residues-rich tracts occupy residues 68 to 90 and 110 to 125; these read SAEK…EAKP and FKAE…AERR. A compositionally biased stretch (low complexity) spans 129–141; it reads KGNNRDQQQNGNR. 2 stretches are compositionally biased toward basic and acidic residues: residues 157–167 and 262–295; these read RDNRRFNDQAK and VPEK…DGPR. Low complexity predominate over residues 309–318; sequence NQKNSNWNNN. A compositionally biased stretch (basic and acidic residues) spans 337-346; that stretch reads VTERKFHELP. Positions 432-599 constitute a tr-type G domain; sequence ERPPVVTIMG…TVLLVAEIQE (168 aa). The G1 stretch occupies residues 441–448; that stretch reads GHVDHGKT. 441–448 provides a ligand contact to GTP; it reads GHVDHGKT. The G2 stretch occupies residues 466 to 470; the sequence is GITQH. The G3 stretch occupies residues 487-490; that stretch reads DTPG. Residues 487–491 and 541–544 contribute to the GTP site; these read DTPGH and NKID. Residues 541–544 form a G4 region; the sequence is NKID. The tract at residues 577–579 is G5; sequence SAK.

Belongs to the TRAFAC class translation factor GTPase superfamily. Classic translation factor GTPase family. IF-2 subfamily.

It is found in the cytoplasm. Functionally, one of the essential components for the initiation of protein synthesis. Protects formylmethionyl-tRNA from spontaneous hydrolysis and promotes its binding to the 30S ribosomal subunits. Also involved in the hydrolysis of GTP during the formation of the 70S ribosomal complex. This is Translation initiation factor IF-2 from Streptococcus pneumoniae (strain Taiwan19F-14).